The sequence spans 79 residues: Small ribosomal subunit protein uS17 (79 aa).

This sequence belongs to the universal ribosomal protein uS17 family. As to quaternary structure, part of the 30S ribosomal subunit.

Its function is as follows. One of the primary rRNA binding proteins, it binds specifically to the 5'-end of 16S ribosomal RNA. The chain is Small ribosomal subunit protein uS17 from Orientia tsutsugamushi (strain Boryong) (Rickettsia tsutsugamushi).